Consider the following 493-residue polypeptide: D-glyceraldehyde dehydrogenase (NADP(+)) (493 aa).

The stretch at 70–92 (RAKELIEKNRAELENIIMEENGK) forms a coiled coil. Residues 146 to 149 (TPWN), Arg157, 172 to 176 (KPSSD), 204 to 210 (RGSEIGD), 225 to 248 (GSTA…ILEL), Cys281, and 381 to 383 (EIF) each bind NADP(+). Residues Asn149 and Arg157 each coordinate substrate. Glu247 (proton acceptor) is an active-site residue. Cys281 contributes to the substrate binding site. The active-site Proton donor is the Cys281.

This sequence belongs to the aldehyde dehydrogenase family. Glyceraldehyde dehydrogenase subfamily. As to quaternary structure, homotetramer. Dimer of dimers.

It carries out the reaction D-glyceraldehyde + NADP(+) + H2O = (R)-glycerate + NADPH + 2 H(+). It participates in carbohydrate degradation; glycolysis. Inhibited by calcium, cadmium, copper and mercury ions. Stable for 2 hours at 60 degrees Celsius but activity is decreased to less than 50 percent within 20 minutes at 80 degrees Celsius. Two folds activity enhancement in the presence of 1 mM glutathione, DTT, or 2-mercaptoethanol. Complete activity inhibition by thiol-modifying reagents such as p-chloromercuribenzoic acid or p-hydroxy-mercuribenzoic acid. Its function is as follows. NADP-dependent dehydrogenase of the nED (non-phosphorylated Entner-Doudoroff) pathway with highest activity towards glyceraldehydes (e.g. D,L-glyceraldehyde and D-glyceraldehyde), to a lesser extent towards D,L-glyceraldehyde-3-phosphate and glycolaldehyde, but no activity towards aliphatic or aromatic aldehydes. The polypeptide is D-glyceraldehyde dehydrogenase (NADP(+)) (Thermoplasma acidophilum (strain ATCC 25905 / DSM 1728 / JCM 9062 / NBRC 15155 / AMRC-C165)).